A 1049-amino-acid chain; its full sequence is Solvent-resistant pump membrane transporter SrpB (1049 aa).

12 helical membrane-spanning segments follow: residues I10–M30, S339–L359, L366–F386, V392–V412, G440–G460, F470–P490, L542–F562, A871–E891, V895–L915, V927–A947, I973–A993, and G1008–V1028.

The protein belongs to the resistance-nodulation-cell division (RND) (TC 2.A.6) family.

Its subcellular location is the cell inner membrane. Functionally, the inner membrane transporter component of an organic solvent efflux pump. Involved in export of a number of low log POW compounds including hexane (log POW 3.5), toluene (log POW 2.5) and dimethylphthalate (log POW 2.3). The solvent resistance phenotype has been postulated to depend on the operon expression level. The protein is Solvent-resistant pump membrane transporter SrpB (srpB) of Pseudomonas putida (Arthrobacter siderocapsulatus).